The sequence spans 931 residues: Probable zinc protease PqqL (931 aa).

Zn(2+) is bound at residue H80. The Proton acceptor role is filled by E83. 2 residues coordinate Zn(2+): H84 and E160.

Belongs to the peptidase M16 family. The cofactor is Zn(2+).

The protein is Probable zinc protease PqqL (pqqL) of Escherichia coli (strain K12).